The sequence spans 75 residues: RNA-binding protein KhpA (75 aa).

Residues 29 to 75 (SIILELKVAPEDMGKVIGKQGRIAKAIRTVIKAAAVKENKRVVVEII) form the KH domain.

Belongs to the KhpA RNA-binding protein family. In terms of assembly, forms a complex with KhpB.

Its subcellular location is the cytoplasm. In terms of biological role, a probable RNA chaperone. Forms a complex with KhpB which binds to cellular RNA and controls its expression. Plays a role in peptidoglycan (PG) homeostasis and cell length regulation. The sequence is that of RNA-binding protein KhpA from Clostridium acetobutylicum (strain ATCC 824 / DSM 792 / JCM 1419 / IAM 19013 / LMG 5710 / NBRC 13948 / NRRL B-527 / VKM B-1787 / 2291 / W).